The primary structure comprises 348 residues: Dihydroorotase (348 aa).

Zn(2+) is bound by residues H17 and H19. Substrate contacts are provided by residues H19–R21 and N45. Zn(2+) is bound by residues K103, H140, and H178. N6-carboxylysine is present on K103. H140 contacts substrate. Residue L223 participates in substrate binding. D251 is a binding site for Zn(2+). The active site involves D251. 2 residues coordinate substrate: H255 and A267.

The protein belongs to the metallo-dependent hydrolases superfamily. DHOase family. Class II DHOase subfamily. As to quaternary structure, homodimer. Requires Zn(2+) as cofactor.

The enzyme catalyses (S)-dihydroorotate + H2O = N-carbamoyl-L-aspartate + H(+). The protein operates within pyrimidine metabolism; UMP biosynthesis via de novo pathway; (S)-dihydroorotate from bicarbonate: step 3/3. Its function is as follows. Catalyzes the reversible cyclization of carbamoyl aspartate to dihydroorotate. This chain is Dihydroorotase, found in Yersinia pseudotuberculosis serotype O:1b (strain IP 31758).